The sequence spans 220 residues: N-(5'-phosphoribosyl)anthranilate isomerase (220 aa).

The protein belongs to the TrpF family.

It carries out the reaction N-(5-phospho-beta-D-ribosyl)anthranilate = 1-(2-carboxyphenylamino)-1-deoxy-D-ribulose 5-phosphate. Its pathway is amino-acid biosynthesis; L-tryptophan biosynthesis; L-tryptophan from chorismate: step 3/5. This chain is N-(5'-phosphoribosyl)anthranilate isomerase, found in Xylella fastidiosa (strain M12).